Reading from the N-terminus, the 425-residue chain is Multifunctional CCA protein (425 aa).

Residues Gly-8 and Arg-11 each coordinate ATP. CTP is bound by residues Gly-8 and Arg-11. Positions 21 and 23 each coordinate Mg(2+). Residues Arg-91, Arg-137, and Arg-140 each coordinate ATP. Residues Arg-91, Arg-137, and Arg-140 each contribute to the CTP site. The HD domain maps to 228–329; that stretch reads TGVHTLMVLD…VDLLDRLGAL (102 aa).

The protein belongs to the tRNA nucleotidyltransferase/poly(A) polymerase family. Bacterial CCA-adding enzyme type 1 subfamily. As to quaternary structure, monomer. Can also form homodimers and oligomers. Requires Mg(2+) as cofactor. Ni(2+) is required as a cofactor.

The catalysed reaction is a tRNA precursor + 2 CTP + ATP = a tRNA with a 3' CCA end + 3 diphosphate. The enzyme catalyses a tRNA with a 3' CCA end + 2 CTP + ATP = a tRNA with a 3' CCACCA end + 3 diphosphate. Catalyzes the addition and repair of the essential 3'-terminal CCA sequence in tRNAs without using a nucleic acid template. Adds these three nucleotides in the order of C, C, and A to the tRNA nucleotide-73, using CTP and ATP as substrates and producing inorganic pyrophosphate. tRNA 3'-terminal CCA addition is required both for tRNA processing and repair. Also involved in tRNA surveillance by mediating tandem CCA addition to generate a CCACCA at the 3' terminus of unstable tRNAs. While stable tRNAs receive only 3'-terminal CCA, unstable tRNAs are marked with CCACCA and rapidly degraded. This chain is Multifunctional CCA protein, found in Methylococcus capsulatus (strain ATCC 33009 / NCIMB 11132 / Bath).